An 887-amino-acid chain; its full sequence is Alanine--tRNA ligase (887 aa).

Histidine 581, histidine 585, cysteine 683, and histidine 687 together coordinate Zn(2+).

This sequence belongs to the class-II aminoacyl-tRNA synthetase family. The cofactor is Zn(2+).

The protein resides in the cytoplasm. It carries out the reaction tRNA(Ala) + L-alanine + ATP = L-alanyl-tRNA(Ala) + AMP + diphosphate. Catalyzes the attachment of alanine to tRNA(Ala) in a two-step reaction: alanine is first activated by ATP to form Ala-AMP and then transferred to the acceptor end of tRNA(Ala). Also edits incorrectly charged Ser-tRNA(Ala) and Gly-tRNA(Ala) via its editing domain. The protein is Alanine--tRNA ligase of Ehrlichia ruminantium (strain Gardel).